Here is a 241-residue protein sequence, read N- to C-terminus: 15,16-dihydrobiliverdin:ferredoxin oxidoreductase (241 aa).

This sequence belongs to the HY2 family.

It carries out the reaction 15,16-dihydrobiliverdin + oxidized 2[4Fe-4S]-[ferredoxin] = biliverdin IXalpha + reduced 2[4Fe-4S]-[ferredoxin] + 2 H(+). Functionally, catalyzes the two-electron reduction of biliverdin IX-alpha at the C15 methine bridge. This is 15,16-dihydrobiliverdin:ferredoxin oxidoreductase (pebA) from Prochlorococcus marinus (strain SARG / CCMP1375 / SS120).